A 313-amino-acid polypeptide reads, in one-letter code: Porphobilinogen deaminase (313 aa).

Residue Cys-241 is modified to S-(dipyrrolylmethanemethyl)cysteine.

The protein belongs to the HMBS family. Monomer. Requires dipyrromethane as cofactor.

It carries out the reaction 4 porphobilinogen + H2O = hydroxymethylbilane + 4 NH4(+). It functions in the pathway porphyrin-containing compound metabolism; protoporphyrin-IX biosynthesis; coproporphyrinogen-III from 5-aminolevulinate: step 2/4. The protein operates within porphyrin-containing compound metabolism; chlorophyll biosynthesis. Tetrapolymerization of the monopyrrole PBG into the hydroxymethylbilane pre-uroporphyrinogen in several discrete steps. This Chlorobium luteolum (strain DSM 273 / BCRC 81028 / 2530) (Pelodictyon luteolum) protein is Porphobilinogen deaminase.